A 333-amino-acid polypeptide reads, in one-letter code: Antimicrobial peptides (333 aa).

Positions 1–23 are cleaved as a signal peptide; it reads MVQKGVVFGVLLILFICSTLTSA. The disordered stretch occupies residues 23–52; that stretch reads ADSKPNPTKEEEPAKKPDEVSVKSGGPEVS. A propeptide spans 24–54 (acidic peptide 1); the sequence is DSKPNPTKEEEPAKKPDEVSVKSGGPEVSED. Over residues 29–43 the composition is skewed to basic and acidic residues; that stretch reads PTKEEEPAKKPDEVS. Glutamine 55 carries the post-translational modification Pyrrolidone carboxylic acid. 2 cysteine pairs are disulfide-bonded: cysteine 60-cysteine 70 and cysteine 61-cysteine 74. The propeptide at 75–102 is acidic peptide 2; sequence ANAEEAAAAIPEASEELAQEEAPVYSED. Residue glutamine 103 is modified to Pyrrolidone carboxylic acid. Disulfide bonds link cysteine 108–cysteine 118 and cysteine 109–cysteine 122. The propeptide at 123–148 is acidic peptide 3; sequence QNAEEAAAAIPEATEKAQEAPVYSED. Pyrrolidone carboxylic acid is present on glutamine 149. 2 disulfide bridges follow: cysteine 154–cysteine 164 and cysteine 155–cysteine 168. A propeptide spans 169 to 196 (acidic peptide 4); that stretch reads QNAEEAAAAVAIPEASEKAQEGPVYSED. Position 197 is a pyrrolidone carboxylic acid (glutamine 197). Cystine bridges form between cysteine 202/cysteine 212 and cysteine 203/cysteine 216. Residues 217 to 232 constitute a propeptide, acidic peptide 5; sequence SNAADEVATPEDVEPG. The residue at position 233 (glutamine 233) is a Pyrrolidone carboxylic acid. 2 cysteine pairs are disulfide-bonded: cysteine 238–cysteine 248 and cysteine 239–cysteine 252. The propeptide at 253–278 is acidic peptide 6; the sequence is HNAAEEATLKAFEEEAAREQPVYSED. Glutamine 279 bears the Pyrrolidone carboxylic acid mark. Cystine bridges form between cysteine 284–cysteine 294 and cysteine 285–cysteine 298. A propeptide spans 299–333 (acidic peptide 7); it reads QSAEEAAAFQAGEVTASLMLIMFKACPCMGPVPSV.

Post-translationally, the N-terminal of all peptides are blocked. In terms of processing, the 4 cysteine residues of all peptides are involved in intrachain disulfide bonds.

Its subcellular location is the secreted. In terms of biological role, plays a role in the defense of the germinating seed against microorganisms, by inhibiting the growth of a range of filamentous fungi and bacteria, especially Gram-positive bacteria. Not cytotoxic for cultured human cells and are the smallest known plant-derived antimicrobial peptides. Peptide IB-AMP4 has a higher antifungal activity than IB-AMP1. This is Antimicrobial peptides (AMP) from Impatiens balsamina (Balsam).